Reading from the N-terminus, the 304-residue chain is Protein phosphatase PTC7 homolog (304 aa).

A mitochondrion-targeting transit peptide spans 1-68 (MFSVLSYGRL…GDDACFVARH (68 aa)). Positions 69-299 (RSADVLGVAD…DDITVLLSIV (231 aa)) constitute a PPM-type phosphatase domain. 3 residues coordinate Mn(2+): Asp-78, Gly-79, and Asp-223.

It belongs to the PP2C family. As to quaternary structure, interacts with FBXL4, BNIP3 and NIX; these interactions are important for ubiquitination and degradation of BNIP3 and NIX. Requires Mg(2+) as cofactor. Mn(2+) is required as a cofactor. Expressed in keratinocytes (at protein level).

It is found in the mitochondrion matrix. It carries out the reaction O-phospho-L-seryl-[protein] + H2O = L-seryl-[protein] + phosphate. The catalysed reaction is O-phospho-L-threonyl-[protein] + H2O = L-threonyl-[protein] + phosphate. Its activity is regulated as follows. Inhibited by sodium orthovanadate. Its function is as follows. Protein phosphatase that plays an essential role in mitochondrial metabolism and biogenesis. Positively regulates biosynthesis of the ubiquinone, coenzyme Q. Dephosphorylates the ubiquinone biosynthesis protein COQ7 which is likely to lead to its activation. Serves as a crucial sensor for mitophagy, though the underlying mechanism remains ambiguous. May dephosphorylate BNIP3 and NIX and thereby directly regulates mitophagy receptor function and stability. Alternatively, promotes SCF-FBXL4-dependent ubiquitination and degradation of BNIP3 and NIX independently of its catalytic activity to restrain mitophagy. This Homo sapiens (Human) protein is Protein phosphatase PTC7 homolog (PPTC7).